The sequence spans 432 residues: Neuronal pentraxin-1 (432 aa).

Residues 1–22 (MLAGRAARTCALLALCLLGSGA) form the signal peptide. The segment at 88–122 (RCESQSTLDSGPGEARSGGGRKQPGSGKNTMGDLS) is disordered. 2 N-linked (GlcNAc...) asparagine glycosylation sites follow: asparagine 154 and asparagine 193. Residues 226–428 (DKFQLTFPLR…GATKWTFEAC (203 aa)) enclose the Pentraxin (PTX) domain. An intrachain disulfide couples cysteine 256 to cysteine 316. Ca(2+) is bound by residues asparagine 280, glutamate 358, glutamine 359, aspartate 360, and glutamine 370.

As to quaternary structure, homooligomer or heterooligomer (probably pentamer) with neuronal pentraxin receptor (NPTXR). It depends on Ca(2+) as a cofactor. In terms of tissue distribution, expressed in brain and kidney.

It is found in the secreted. The protein resides in the cytoplasmic vesicle. It localises to the secretory vesicle. Its subcellular location is the endoplasmic reticulum. Its function is as follows. May be involved in mediating uptake of synaptic material during synapse remodeling or in mediating the synaptic clustering of AMPA glutamate receptors at a subset of excitatory synapses. This Mus musculus (Mouse) protein is Neuronal pentraxin-1 (Nptx1).